A 348-amino-acid chain; its full sequence is MDLGNSGNDSVVTKFVLLGLTETAALQPILFVIFLLAYVTTIGGTLSILAAILMETKLHSPMYFFLGNLSLPDVGCVSVTVPAMLSHFISNDRSIPYKACLSELFFFHLLAGADCFLLTIMAYDRYLAICQSLTYSSRMSWGIQQALVGMSCVFSFTNALTQTVALSPLNFCGPNVINHFYCDLPQPFQLSCSSVHLNGQLLFVAAAFMGVAPLVLITVSYAHVAAAVLRIRSAEGRKKAFSTCSSHLTVVGIFYGTGVFSYTRLGSVESSDKDKGIGILNTVISPMLNPLIYWTSLLDVGCISHCSSDAGVSPGPPVQSSLCCLQFTALLSPPPGWGGLSPLNSHGL.

The Extracellular segment spans residues 1–28 (MDLGNSGNDSVVTKFVLLGLTETAALQP). Asn8 carries an N-linked (GlcNAc...) asparagine glycan. Residues 29–52 (ILFVIFLLAYVTTIGGTLSILAAI) form a helical membrane-spanning segment. The Cytoplasmic portion of the chain corresponds to 53–60 (LMETKLHS). The chain crosses the membrane as a helical span at residues 61-82 (PMYFFLGNLSLPDVGCVSVTVP). Over 83-103 (AMLSHFISNDRSIPYKACLSE) the chain is Extracellular. Cys100 and Cys192 are joined by a disulfide. A helical membrane pass occupies residues 104–123 (LFFFHLLAGADCFLLTIMAY). Residues 124-143 (DRYLAICQSLTYSSRMSWGI) lie on the Cytoplasmic side of the membrane. The chain crosses the membrane as a helical span at residues 144-161 (QQALVGMSCVFSFTNALT). The Extracellular portion of the chain corresponds to 162–199 (QTVALSPLNFCGPNVINHFYCDLPQPFQLSCSSVHLNG). A helical transmembrane segment spans residues 200–222 (QLLFVAAAFMGVAPLVLITVSYA). The Cytoplasmic segment spans residues 223-239 (HVAAAVLRIRSAEGRKK). A helical transmembrane segment spans residues 240–262 (AFSTCSSHLTVVGIFYGTGVFSY). The Extracellular segment spans residues 263 to 275 (TRLGSVESSDKDK). A helical transmembrane segment spans residues 276–295 (GIGILNTVISPMLNPLIYWT). Residues 296–348 (SLLDVGCISHCSSDAGVSPGPPVQSSLCCLQFTALLSPPPGWGGLSPLNSHGL) are Cytoplasmic-facing.

It belongs to the G-protein coupled receptor 1 family.

Its subcellular location is the cell membrane. Odorant receptor. The polypeptide is Putative olfactory receptor 3A4 (OR3A4P) (Homo sapiens (Human)).